A 94-amino-acid chain; its full sequence is Small ribosomal subunit protein bS20 (94 aa).

The protein belongs to the bacterial ribosomal protein bS20 family.

Binds directly to 16S ribosomal RNA. This chain is Small ribosomal subunit protein bS20, found in Aquifex aeolicus (strain VF5).